Consider the following 253-residue polypeptide: Ubiquinone/menaquinone biosynthesis C-methyltransferase UbiE (253 aa).

Residues threonine 76, aspartate 97, and 125 to 126 contribute to the S-adenosyl-L-methionine site; that span reads DA.

The protein belongs to the class I-like SAM-binding methyltransferase superfamily. MenG/UbiE family.

It catalyses the reaction a 2-demethylmenaquinol + S-adenosyl-L-methionine = a menaquinol + S-adenosyl-L-homocysteine + H(+). The enzyme catalyses a 2-methoxy-6-(all-trans-polyprenyl)benzene-1,4-diol + S-adenosyl-L-methionine = a 5-methoxy-2-methyl-3-(all-trans-polyprenyl)benzene-1,4-diol + S-adenosyl-L-homocysteine + H(+). It participates in quinol/quinone metabolism; menaquinone biosynthesis; menaquinol from 1,4-dihydroxy-2-naphthoate: step 2/2. Its pathway is cofactor biosynthesis; ubiquinone biosynthesis. Its function is as follows. Methyltransferase required for the conversion of demethylmenaquinol (DMKH2) to menaquinol (MKH2) and the conversion of 2-polyprenyl-6-methoxy-1,4-benzoquinol (DDMQH2) to 2-polyprenyl-3-methyl-6-methoxy-1,4-benzoquinol (DMQH2). This Azotobacter vinelandii (strain DJ / ATCC BAA-1303) protein is Ubiquinone/menaquinone biosynthesis C-methyltransferase UbiE.